Consider the following 148-residue polypeptide: SsrA-binding protein (148 aa).

This sequence belongs to the SmpB family.

It localises to the cytoplasm. In terms of biological role, required for rescue of stalled ribosomes mediated by trans-translation. Binds to transfer-messenger RNA (tmRNA), required for stable association of tmRNA with ribosomes. tmRNA and SmpB together mimic tRNA shape, replacing the anticodon stem-loop with SmpB. tmRNA is encoded by the ssrA gene; the 2 termini fold to resemble tRNA(Ala) and it encodes a 'tag peptide', a short internal open reading frame. During trans-translation Ala-aminoacylated tmRNA acts like a tRNA, entering the A-site of stalled ribosomes, displacing the stalled mRNA. The ribosome then switches to translate the ORF on the tmRNA; the nascent peptide is terminated with the 'tag peptide' encoded by the tmRNA and targeted for degradation. The ribosome is freed to recommence translation, which seems to be the essential function of trans-translation. The sequence is that of SsrA-binding protein from Pseudothermotoga lettingae (strain ATCC BAA-301 / DSM 14385 / NBRC 107922 / TMO) (Thermotoga lettingae).